The following is a 222-amino-acid chain: Chorionic somatomammotropin hormone-like 1 (222 aa).

The first 26 residues, Met-1–Ala-26, serve as a signal peptide directing secretion. Residues His-44 and Glu-205 each coordinate Zn(2+). Residues Cys-213 and Cys-220 are joined by a disulfide bond.

Belongs to the somatotropin/prolactin family.

It localises to the secreted. May be a novel gestational hormone required to compensate for absence of other members of the GH/CS cluster during gestation. In Homo sapiens (Human), this protein is Chorionic somatomammotropin hormone-like 1 (CSHL1).